Reading from the N-terminus, the 210-residue chain is Uracil phosphoribosyltransferase (210 aa).

Residues R78, R103, and 130–138 (DPMLATGGT) each bind 5-phospho-alpha-D-ribose 1-diphosphate. Uracil-binding positions include I193 and 198–200 (GDA). D199 is a 5-phospho-alpha-D-ribose 1-diphosphate binding site.

The protein belongs to the UPRTase family. Requires Mg(2+) as cofactor.

The enzyme catalyses UMP + diphosphate = 5-phospho-alpha-D-ribose 1-diphosphate + uracil. Its pathway is pyrimidine metabolism; UMP biosynthesis via salvage pathway; UMP from uracil: step 1/1. Its activity is regulated as follows. Allosterically activated by GTP. Functionally, catalyzes the conversion of uracil and 5-phospho-alpha-D-ribose 1-diphosphate (PRPP) to UMP and diphosphate. The sequence is that of Uracil phosphoribosyltransferase from Xanthomonas axonopodis pv. citri (strain 306).